Reading from the N-terminus, the 257-residue chain is Phycoerythrobilin:ferredoxin oxidoreductase (257 aa).

Belongs to the HY2 family.

It catalyses the reaction (3Z)-phycoerythrobilin + oxidized 2[4Fe-4S]-[ferredoxin] = 15,16-dihydrobiliverdin + reduced 2[4Fe-4S]-[ferredoxin] + 2 H(+). In terms of biological role, catalyzes the two-electron reduction of the C2 and C3(1) diene system of 15,16-dihydrobiliverdin. The protein is Phycoerythrobilin:ferredoxin oxidoreductase of Synechococcus sp. (strain CC9311).